A 513-amino-acid chain; its full sequence is V-type proton ATPase subunit B (513 aa).

Arg375 serves as a coordination point for ATP. Over residues 484–503 (ADRKGKGKDKPTTKDTRDTA) the composition is skewed to basic and acidic residues. The disordered stretch occupies residues 484-513 (ADRKGKGKDKPTTKDTRDTAAPEEENLIDA). Positions 504–513 (APEEENLIDA) are enriched in acidic residues.

It belongs to the ATPase alpha/beta chains family. V-ATPase is a heteromultimeric enzyme composed of a peripheral catalytic V1 complex (components A to H) attached to an integral membrane V0 proton pore complex (components: a, c, c', c'', d, e, f and VOA1).

It is found in the vacuole membrane. Its function is as follows. Non-catalytic subunit of the V1 complex of vacuolar(H+)-ATPase (V-ATPase), a multisubunit enzyme composed of a peripheral complex (V1) that hydrolyzes ATP and a membrane integral complex (V0) that translocates protons. V-ATPase is responsible for acidifying and maintaining the pH of intracellular compartments. The protein is V-type proton ATPase subunit B of Neurospora crassa (strain ATCC 24698 / 74-OR23-1A / CBS 708.71 / DSM 1257 / FGSC 987).